The chain runs to 141 residues: Large ribosomal subunit protein uL11 (141 aa).

It belongs to the universal ribosomal protein uL11 family. In terms of assembly, part of the ribosomal stalk of the 50S ribosomal subunit. Interacts with L10 and the large rRNA to form the base of the stalk. L10 forms an elongated spine to which L12 dimers bind in a sequential fashion forming a multimeric L10(L12)X complex. One or more lysine residues are methylated.

In terms of biological role, forms part of the ribosomal stalk which helps the ribosome interact with GTP-bound translation factors. This is Large ribosomal subunit protein uL11 from Campylobacter lari (strain RM2100 / D67 / ATCC BAA-1060).